The primary structure comprises 638 residues: DNA mismatch repair protein MutL (638 aa).

The tract at residues 398–435 (GREGTSFGTQTNAFGSMATPRDNSRGSYSAGESRQRTE) is disordered.

It belongs to the DNA mismatch repair MutL/HexB family.

This protein is involved in the repair of mismatches in DNA. It is required for dam-dependent methyl-directed DNA mismatch repair. May act as a 'molecular matchmaker', a protein that promotes the formation of a stable complex between two or more DNA-binding proteins in an ATP-dependent manner without itself being part of a final effector complex. The sequence is that of DNA mismatch repair protein MutL from Shewanella baltica (strain OS155 / ATCC BAA-1091).